Here is a 349-residue protein sequence, read N- to C-terminus: Transcription factor HBP-1a (349 aa).

Positions 1–11 (MGSNDPSTPSK) are enriched in polar residues. 4 disordered regions span residues 1–39 (MGSN…WPGF), 101–196 (FHYP…NKPM), 224–277 (GATG…QAEC), and 312–349 (NTSL…QKEP). Over residues 113–124 (PAGAQGAAPGAA) the composition is skewed to low complexity. A compositionally biased stretch (polar residues) spans 174-191 (NENGSAQNGVSHSSSHGT). One can recognise a bZIP domain in the interval 252–315 (ELKKQKRKLS…EELLSKNTSL (64 aa)). The basic motif stretch occupies residues 254–273 (KKQKRKLSNRESARRSRLRK). The span at 261–277 (SNRESARRSRLRKQAEC) shows a compositional bias: basic and acidic residues. The leucine-zipper stretch occupies residues 280–315 (LGQRAEALKSENSSLRIELDRIKKEYEELLSKNTSL). The segment covering 334–349 (MNERGDTNGGSHQKEP) has biased composition (basic and acidic residues).

Belongs to the bZIP family. Binds DNA as a dimer.

The protein resides in the nucleus. Binds to the hexamer motif 5'-ACGTCA-3' of histone gene promoters. The polypeptide is Transcription factor HBP-1a (Triticum aestivum (Wheat)).